A 1694-amino-acid polypeptide reads, in one-letter code: Clathrin heavy chain (1694 aa).

Residues M1–Y478 form a globular terminal domain region. WD40-like repeat regions lie at residues S23 to K67, T68 to P107, L108 to Q149, N150 to E195, G196 to A256, S257 to E300, and N301 to D329. Positions E448–D464 are binding site for the uncoating ATPase, involved in lattice disassembly. Positions Y479–N522 are flexible linker. The segment at A523 to F1694 is heavy chain arm. CHCR repeat units lie at residues K537–Q681, A687–Y829, I834–D973, L980–C1125, F1129–A1270, I1275–N1421, and L1424–F1567. The interval A1214–A1523 is involved in binding clathrin light chain. Positions G1551 to F1694 are trimerization. Residues K1610–Q1640 adopt a coiled-coil conformation.

The protein belongs to the clathrin heavy chain family. Clathrin coats are formed from molecules containing 3 heavy chains and 3 light chains.

Its subcellular location is the cytoplasmic vesicle membrane. It is found in the membrane. The protein localises to the coated pit. Clathrin is the major protein of the polyhedral coat of coated pits and vesicles. The polypeptide is Clathrin heavy chain (chcA) (Dictyostelium discoideum (Social amoeba)).